We begin with the raw amino-acid sequence, 255 residues long: Small ribosomal subunit protein uS2 (255 aa).

The disordered stretch occupies residues 233–255 (DFVAEEAASEESLEELAEIVEGK).

This sequence belongs to the universal ribosomal protein uS2 family.

This chain is Small ribosomal subunit protein uS2, found in Lactococcus lactis subsp. cremoris (strain SK11).